A 153-amino-acid polypeptide reads, in one-letter code: UPF0756 membrane protein LCABL_15860 (153 aa).

The next 4 membrane-spanning stretches (helical) occupy residues 4–24 (WLFL…SLII), 52–72 (WGVT…EIGF), 85–105 (WIAI…VGLL), and 115–135 (LVFG…GPVI).

The protein belongs to the UPF0756 family.

It is found in the cell membrane. In Lacticaseibacillus casei (strain BL23) (Lactobacillus casei), this protein is UPF0756 membrane protein LCABL_15860.